We begin with the raw amino-acid sequence, 380 residues long: Cytochrome b (380 aa).

4 helical membrane-spanning segments follow: residues 34 to 54 (FGSL…LLAM), 78 to 99 (WLIR…YLHI), 114 to 134 (WNTG…GYVL), and 179 to 199 (FFAL…IHLT). Heme b-binding residues include His-84 and His-98. Residues His-183 and His-197 each contribute to the heme b site. A ubiquinone is bound at residue His-202. Transmembrane regions (helical) follow at residues 227–247 (LKDI…ALFS), 289–309 (LGGV…PFLH), 321–341 (LSQL…WVGS), and 348–368 (FIII…ILFP).

Belongs to the cytochrome b family. As to quaternary structure, the cytochrome bc1 complex contains 11 subunits: 3 respiratory subunits (MT-CYB, CYC1 and UQCRFS1), 2 core proteins (UQCRC1 and UQCRC2) and 6 low-molecular weight proteins (UQCRH/QCR6, UQCRB/QCR7, UQCRQ/QCR8, UQCR10/QCR9, UQCR11/QCR10 and a cleavage product of UQCRFS1). This cytochrome bc1 complex then forms a dimer. The cofactor is heme b.

Its subcellular location is the mitochondrion inner membrane. Its function is as follows. Component of the ubiquinol-cytochrome c reductase complex (complex III or cytochrome b-c1 complex) that is part of the mitochondrial respiratory chain. The b-c1 complex mediates electron transfer from ubiquinol to cytochrome c. Contributes to the generation of a proton gradient across the mitochondrial membrane that is then used for ATP synthesis. The sequence is that of Cytochrome b (MT-CYB) from Pterodroma hypoleuca (Bonin petrel).